A 779-amino-acid polypeptide reads, in one-letter code: Acyl-homoserine lactone acylase PvdQ (779 aa).

The signal sequence occupies residues 1-25 (MIISRPLCGFVFAGLSFAVILPAQA). Positions 202–223 (SQQVQALQLAAVRNQRFALERG) are cleaved as a propeptide — spacer peptide. S224 functions as the Nucleophile in the catalytic mechanism. Polar residues predominate over residues 731–746 (ESSNPQSAHSSDQTEA). The disordered stretch occupies residues 731 to 752 (ESSNPQSAHSSDQTEAFSKKQW).

The protein belongs to the peptidase S45 family. As to quaternary structure, heterodimer of an alpha subunit and a beta subunit processed from the same precursor.

The protein resides in the periplasm. It carries out the reaction an N-acyl-L-homoserine lactone + H2O = L-homoserine lactone + a carboxylate. Catalyzes the deacylation of acyl-homoserine lactone (AHL or acyl-HSL), releasing homoserine lactone (HSL) and the corresponding fatty acid. Possesses a specificity for the degradation of long-chain acyl-HSLs (side chains of 11 to 14 carbons in length). The protein is Acyl-homoserine lactone acylase PvdQ (pvdQ) of Pseudomonas savastanoi pv. phaseolicola (strain 1448A / Race 6) (Pseudomonas syringae pv. phaseolicola (strain 1448A / Race 6)).